The sequence spans 67 residues: DNA-directed RNA polymerase subunit omega (67 aa).

Belongs to the RNA polymerase subunit omega family. As to quaternary structure, the RNAP catalytic core consists of 2 alpha, 1 beta, 1 beta' and 1 omega subunit. When a sigma factor is associated with the core the holoenzyme is formed, which can initiate transcription.

It carries out the reaction RNA(n) + a ribonucleoside 5'-triphosphate = RNA(n+1) + diphosphate. Promotes RNA polymerase assembly. Latches the N- and C-terminal regions of the beta' subunit thereby facilitating its interaction with the beta and alpha subunits. The chain is DNA-directed RNA polymerase subunit omega from Burkholderia pseudomallei (strain 1106a).